A 282-amino-acid chain; its full sequence is Sulfur carrier protein FdhD (282 aa).

The active-site Cysteine persulfide intermediate is Cys-115.

It belongs to the FdhD family.

Its subcellular location is the cytoplasm. In terms of biological role, required for formate dehydrogenase (FDH) activity. Acts as a sulfur carrier protein that transfers sulfur from IscS to the molybdenum cofactor prior to its insertion into FDH. The polypeptide is Sulfur carrier protein FdhD (Streptomyces avermitilis (strain ATCC 31267 / DSM 46492 / JCM 5070 / NBRC 14893 / NCIMB 12804 / NRRL 8165 / MA-4680)).